The sequence spans 357 residues: Thiamine thiazole synthase, chloroplastic (357 aa).

Substrate-binding positions include alanine 102, 123-124, glycine 131, and valine 196; that span reads EQ. A 2,3-didehydroalanine (Cys) modification is found at cysteine 233. Residues aspartate 235, histidine 250, methionine 304, and 314–316 contribute to the substrate site; that span reads RMG.

Belongs to the THI4 family. In terms of assembly, homooctamer. Requires Fe cation as cofactor. Post-translationally, during the catalytic reaction, a sulfide is transferred from Cys-233 to a reaction intermediate, generating a dehydroalanine residue.

It localises to the plastid. Its subcellular location is the chloroplast. It carries out the reaction [ADP-thiazole synthase]-L-cysteine + glycine + NAD(+) = [ADP-thiazole synthase]-dehydroalanine + ADP-5-ethyl-4-methylthiazole-2-carboxylate + nicotinamide + 3 H2O + 2 H(+). In terms of biological role, involved in biosynthesis of the thiamine precursor thiazole. Catalyzes the conversion of NAD and glycine to adenosine diphosphate 5-(2-hydroxyethyl)-4-methylthiazole-2-carboxylic acid (ADT), an adenylated thiazole intermediate. The reaction includes an iron-dependent sulfide transfer from a conserved cysteine residue of the protein to a thiazole intermediate. The enzyme can only undergo a single turnover, which suggests it is a suicide enzyme. May have additional roles in adaptation to various stress conditions and in DNA damage tolerance. This is Thiamine thiazole synthase, chloroplastic from Chlamydomonas reinhardtii (Chlamydomonas smithii).